A 432-amino-acid chain; its full sequence is Serine hydroxymethyltransferase (432 aa).

(6S)-5,6,7,8-tetrahydrofolate contacts are provided by residues leucine 131 and glycine 135–leucine 137. Lysine 240 is modified (N6-(pyridoxal phosphate)lysine).

It belongs to the SHMT family. As to quaternary structure, homodimer. Pyridoxal 5'-phosphate serves as cofactor.

It localises to the cytoplasm. The catalysed reaction is (6R)-5,10-methylene-5,6,7,8-tetrahydrofolate + glycine + H2O = (6S)-5,6,7,8-tetrahydrofolate + L-serine. It functions in the pathway one-carbon metabolism; tetrahydrofolate interconversion. It participates in amino-acid biosynthesis; glycine biosynthesis; glycine from L-serine: step 1/1. In terms of biological role, catalyzes the reversible interconversion of serine and glycine with tetrahydrofolate (THF) serving as the one-carbon carrier. This reaction serves as the major source of one-carbon groups required for the biosynthesis of purines, thymidylate, methionine, and other important biomolecules. Also exhibits THF-independent aldolase activity toward beta-hydroxyamino acids, producing glycine and aldehydes, via a retro-aldol mechanism. The chain is Serine hydroxymethyltransferase from Bradyrhizobium diazoefficiens (strain JCM 10833 / BCRC 13528 / IAM 13628 / NBRC 14792 / USDA 110).